The primary structure comprises 513 residues: MSYGSIARGGGLGSRGPFGGPSRQGCQPLECARCWTEYGIRHFPCPSPESKLQNRCVGKDGEGDLGPAGTPIVPRARKRGPGVAPEGSRMPEPTSSPTIGPRKDSAAGPHGRMAGPSTTRAKKRKPNFCPQETEVLVSKVSKHHQLLFGTGLLKAEPTRRYRVWSRILQAVNALGYCRRDVVDLKHKWRDLRAVVRRKLGDLRKAAHGPSPGSGKPQALALTPVEQVVAKTFSCQALPSEGFSLEPPRATQVDPCNLQELFQEMSANVFRINSSVTSLERSLQSLGTPSDTQELRDSLHTAQQETNKTIAASASSVKQMAELLRSSCPQERLQQERPQLDRLKTQLSDAIQCYGVVQKKIAEKSRALLPMAQRGSKQSPQAPFAELADDEKVFNGSDNMWQGQEQALLPDITEEDLEAIRLREEAILQMESNLLDVNQIIKDLASMVSEQGEAVDSIEASLEAASSHAEAARQLLAGASRHQLQRHKIKCCFLSAGVTALLVIIIIIATSVRK.

Disordered stretches follow at residues 1-23 (MSYGSIARGGGLGSRGPFGGPSR) and 49-128 (ESKL…KPNF). Residues 7-19 (ARGGGLGSRGPFG) are compositionally biased toward gly residues. A Phosphoserine modification is found at Ser-378. Positions 416–478 (LEAIRLREEA…EAARQLLAGA (63 aa)) constitute a t-SNARE coiled-coil homology domain. A helical transmembrane segment spans residues 491-511 (CFLSAGVTALLVIIIIIATSV).

It is found in the membrane. The sequence is that of t-SNARE domain-containing protein 1 (TSNARE1) from Homo sapiens (Human).